We begin with the raw amino-acid sequence, 209 residues long: MERKVFSKDGKEIRTINLDDRVFNIEISHGSIYNAIKNELSNLRVGTSSTKTRSEVRGSSKKPWKQKGTGRARVGTRRNPVWIGGGIALGPKPRDYSYRLPKKVKRLAFKSVLSLRASDENNFKVIENFNIESGKTKDLALIIKNFASFNGKVVILLGNDDQMIKRAGKNIRDLKILSFDKLRVVDLFYAKNLIALESAVNKLNEFYVK.

A disordered region spans residues 46-71 (GTSSTKTRSEVRGSSKKPWKQKGTGR). The span at 59-71 (SSKKPWKQKGTGR) shows a compositional bias: basic residues.

Belongs to the universal ribosomal protein uL4 family. As to quaternary structure, part of the 50S ribosomal subunit.

Its function is as follows. One of the primary rRNA binding proteins, this protein initially binds near the 5'-end of the 23S rRNA. It is important during the early stages of 50S assembly. It makes multiple contacts with different domains of the 23S rRNA in the assembled 50S subunit and ribosome. Forms part of the polypeptide exit tunnel. In Borreliella afzelii (strain PKo) (Borrelia afzelii), this protein is Large ribosomal subunit protein uL4.